A 245-amino-acid chain; its full sequence is MKILISNDDGYLAPGLIALADAMAAIADIVVVAPDSNRSGSSNSLTLDRPLSVYQAANGFYFINGTPSDCVHIALTGIMSEPPDLIVSGINQGQNMGDDTLYSGTVAAATEGFLFGIPAIAFSQVNKGWGQIDAAARVARDIVERRFDTYGKPFLLNVNIPNLPYEQMKSPVATRLGKRHQSEAVIKAQDPHGRDIYWIGPCGGQKDAGEGTDFHATALGHVSITPLQIDLTHTAQLEALKKVLV.

D8, D9, S39, and N91 together coordinate a divalent metal cation.

This sequence belongs to the SurE nucleotidase family. The cofactor is a divalent metal cation.

The protein localises to the cytoplasm. It carries out the reaction a ribonucleoside 5'-phosphate + H2O = a ribonucleoside + phosphate. Functionally, nucleotidase that shows phosphatase activity on nucleoside 5'-monophosphates. In Janthinobacterium sp. (strain Marseille) (Minibacterium massiliensis), this protein is 5'-nucleotidase SurE.